A 293-amino-acid polypeptide reads, in one-letter code: Caspase-6 (293 aa).

Residues 1-20 (MSSEPPPRRARGPGEEQNMT) form a disordered region. A propeptide spanning residues 1 to 23 (MSSEPPPRRARGPGEEQNMTEID) is cleaved from the precursor. A tri-arginine exosite region spans residues 42–44 (KRR). Phosphoserine is present on S79. The active site involves H121. A 130's region region spans residues 125–142 (NHIYAYDAKIEIQTLTGL). C163 is a catalytic residue. Positions 180–193 (HRTDTPDANLTQVD) are excised as a propeptide. S257 bears the Phosphoserine mark. S-palmitoyl cysteine attachment occurs at residues C264 and C277.

The protein belongs to the peptidase C14A family. In terms of assembly, heterotetramer that consists of two anti-parallel arranged heterodimers, each one formed by a 18 kDa (p18) and a 11 kDa (p11) subunits. Interacts with BIRC6/bruce. Interacts with RIPK3. As to quaternary structure, heterotetramer that consists of two anti-parallel arranged heterodimers, each one formed by a 18 kDa (Caspase-6 subunit p18) and a 11 kDa (Caspase-6 subunit p11) subunit. Post-translationally, phosphorylated by NUAK1; phosphorylation inhibits self-activation. Phosphorylation at Ser-257 by AMP-activated protein kinase (PRKAA1 or PRKAA2) inhibits autocleavage, preventing caspase activation, thereby preventing hepatocyte apoptosis. In terms of processing, palmitoylation by ZDHHC17 blocks dimerization and subsequent activation, leading to inhibit the cysteine protease activity. Can be cleaved and activated by different caspases, depending on the context. Cleaved and activated by caspase-8 (CASP8) and subsequently by caspase-3 (CASP3). Can also undergo autoactivation by mediating autocleavage at Asp-179 and Asp-193, while it is not able to cleave its N-terminal disordered prodomain. Cleaved and activated by CASP1, possibly in the context of inflammation.

The protein resides in the cytoplasm. It is found in the nucleus. The catalysed reaction is Strict requirement for Asp at position P1 and has a preferred cleavage sequence of Val-Glu-His-Asp-|-.. With respect to regulation, during activation, the N-terminal disordered prodomain is removed by cleavage. Concomitantly, double cleavage gives rise to a large 18-kDa and a small 11-kDa subunit. The two large and two small subunits then assemble to form the active CASP6 complex. Can be cleaved and activated by different caspases, depending on the context. Cleaved and activated by caspase-8 (CASP8) and subsequently by caspase-3 (CASP3). Can also undergo autoactivation by mediating autocleavage at Asp-179 and Asp-193, while it is not able to cleave its N-terminal disordered prodomain. Intramolecular cleavage at Asp-193 is a prerequisite for CASP6 self-activation. Cleaved and activated by CASP1 in neurons, possibly in the context of inflammation. Phosphorylation at Ser-257 inhibits autocleavage, preventing caspase activation. Functionally, cysteine protease that plays essential roles in programmed cell death, axonal degeneration, development and innate immunity. Acts as a non-canonical executioner caspase during apoptosis: localizes in the nucleus and cleaves the nuclear structural protein NUMA1 and lamin A/LMNA thereby inducing nuclear shrinkage and fragmentation. Lamin-A/LMNA cleavage is required for chromatin condensation and nuclear disassembly during apoptotic execution. Acts as a regulator of liver damage by promoting hepatocyte apoptosis: in absence of phosphorylation by AMP-activated protein kinase (AMPK), catalyzes cleavage of BID, leading to cytochrome c release, thereby participating in nonalcoholic steatohepatitis. Cleaves PARK7/DJ-1 in cells undergoing apoptosis. Involved in intrinsic apoptosis by mediating cleavage of RIPK1. Furthermore, cleaves many transcription factors such as NF-kappa-B and cAMP response element-binding protein/CREBBP. Cleaves phospholipid scramblase proteins XKR4 and XKR9. In addition to apoptosis, involved in different forms of programmed cell death. Plays an essential role in defense against viruses by acting as a central mediator of the ZBP1-mediated pyroptosis, apoptosis, and necroptosis (PANoptosis), independently of its cysteine protease activity. PANoptosis is a unique inflammatory programmed cell death, which provides a molecular scaffold that allows the interactions and activation of machinery required for inflammasome/pyroptosis, apoptosis and necroptosis. Mechanistically, interacts with RIPK3 and enhances the interaction between RIPK3 and ZBP1, leading to ZBP1-mediated inflammasome activation and cell death. Plays an essential role in axon degeneration during axon pruning which is the remodeling of axons during neurogenesis but not apoptosis. Regulates B-cell programs both during early development and after antigen stimulation. In Bos taurus (Bovine), this protein is Caspase-6.